The primary structure comprises 514 residues: HTH-type transcriptional regulatory protein TyrR (514 aa).

The ACT domain maps to 2 to 72 (RLEVFCEDRL…GVTDVRTVPW (71 aa)). The region spanning 78-120 (EHLALSALLEALPEPVLSLDMKSKIEMANPASCQLFAHTQDRM) is the PAS domain. Residues 206 to 428 (IIAVSAKMKH…VKNAIYRALT (223 aa)) form the Sigma-54 factor interaction domain. Residues 234 to 241 (GNTGTGKD) and 290 to 299 (ANGGSVLLDE) contribute to the ATP site. Positions 482–502 (STRKLAKRLGVSHTAIANKLR) form a DNA-binding region, H-T-H motif.

Homodimer. In presence of tyrosine (or high concentrations of phenylalanine or tryptophan) and ATP, it self-associates to form an hexamer.

It localises to the cytoplasm. Functionally, dual transcriptional regulator of the TyrR regulon, which includes a number of genes coding for proteins involved in the biosynthesis or transport of the three aromatic amino acids, phenylalanine, tyrosine and tryptophan. These three aromatic amino acids act as effectors which bind to the TyrR protein to form an active regulatory protein. Acts by binding specifically to TyrR boxes in the promoter region of the target genes. This Citrobacter braakii protein is HTH-type transcriptional regulatory protein TyrR.